Here is a 445-residue protein sequence, read N- to C-terminus: Bifunctional protein GlmU (445 aa).

The tract at residues 1–218 (MRALVLAAGK…LLEITGVNTR (218 aa)) is pyrophosphorylase. UDP-N-acetyl-alpha-D-glucosamine contacts are provided by residues 6–9 (LAAG), Lys20, Gln69, 74–75 (GT), 96–98 (YGD), Gly134, Glu147, Asn162, and Asn216. Mg(2+) is bound at residue Asp98. Asn216 contributes to the Mg(2+) binding site. A linker region spans residues 219–239 (KTLVWLEEQLRMRKIEELLEN). Residues 240–445 (GVTILDPATT…GWVLKKRKEE (206 aa)) form an N-acetyltransferase region. Arg321 and Lys339 together coordinate UDP-N-acetyl-alpha-D-glucosamine. Catalysis depends on His351, which acts as the Proton acceptor. 2 residues coordinate UDP-N-acetyl-alpha-D-glucosamine: Tyr354 and Asn365. Residues Ala368, 374–375 (NY), Ser393, Ala411, and Arg428 contribute to the acetyl-CoA site.

This sequence in the N-terminal section; belongs to the N-acetylglucosamine-1-phosphate uridyltransferase family. The protein in the C-terminal section; belongs to the transferase hexapeptide repeat family. In terms of assembly, homotrimer. Mg(2+) is required as a cofactor.

It localises to the cytoplasm. It carries out the reaction alpha-D-glucosamine 1-phosphate + acetyl-CoA = N-acetyl-alpha-D-glucosamine 1-phosphate + CoA + H(+). It catalyses the reaction N-acetyl-alpha-D-glucosamine 1-phosphate + UTP + H(+) = UDP-N-acetyl-alpha-D-glucosamine + diphosphate. It functions in the pathway nucleotide-sugar biosynthesis; UDP-N-acetyl-alpha-D-glucosamine biosynthesis; N-acetyl-alpha-D-glucosamine 1-phosphate from alpha-D-glucosamine 6-phosphate (route II): step 2/2. Its pathway is nucleotide-sugar biosynthesis; UDP-N-acetyl-alpha-D-glucosamine biosynthesis; UDP-N-acetyl-alpha-D-glucosamine from N-acetyl-alpha-D-glucosamine 1-phosphate: step 1/1. It participates in bacterial outer membrane biogenesis; LPS lipid A biosynthesis. In terms of biological role, catalyzes the last two sequential reactions in the de novo biosynthetic pathway for UDP-N-acetylglucosamine (UDP-GlcNAc). The C-terminal domain catalyzes the transfer of acetyl group from acetyl coenzyme A to glucosamine-1-phosphate (GlcN-1-P) to produce N-acetylglucosamine-1-phosphate (GlcNAc-1-P), which is converted into UDP-GlcNAc by the transfer of uridine 5-monophosphate (from uridine 5-triphosphate), a reaction catalyzed by the N-terminal domain. The protein is Bifunctional protein GlmU of Thermotoga sp. (strain RQ2).